A 907-amino-acid polypeptide reads, in one-letter code: Potassium channel AKT3 (907 aa).

Residues 1 to 75 (MPTTKCAVPL…YDRRYELWNN (75 aa)) lie on the Cytoplasmic side of the membrane. Residues 76 to 96 (YLILLVVYSAWVTPFEFGFVP) form a helical membrane-spanning segment. At 97 to 102 (EPAGAL) the chain is on the extracellular side. Residues 103-123 (AAADNAVNAFFAVDIVLTFFV) traverse the membrane as a helical segment. Residues 124–146 (AYTDPKTFLLQDDPRKIALRYIT) lie on the Cytoplasmic side of the membrane. The helical transmembrane segment at 147–167 (TWFVLDVVATIPTELARRILP) threads the bilayer. At 168–174 (PDLRSYG) the chain is on the extracellular side. A helical; Voltage-sensor membrane pass occupies residues 175-195 (FFGILRLWRLHRVGILFARLE). Topologically, residues 196–209 (KDRKFSYFWVRCVK) are cytoplasmic. A helical transmembrane segment spans residues 210–230 (LVCVTLFAVHCSACFYYLLAD). The Extracellular portion of the chain corresponds to 231 to 257 (RYPDPTNTWISAYMPNFHKASIWSRYV). The pore-forming intramembrane region spans 258–277 (ASMYWSITTLSTVGYGDMHA). Over 278-288 (ENTGEMVFTTT) the chain is Extracellular. Residues 289 to 309 (YMLFNLGLTAYIIGNMTNLVV) form a helical membrane-spanning segment. The Cytoplasmic segment spans residues 310–907 (HGTSRTRKFR…VPPENRSRNQ (598 aa)). A nucleoside 3',5'-cyclic phosphate is bound at residue 388 to 512 (LFEGVSNDLI…TIVMNNLIQY (125 aa)). 5 ANK repeats span residues 539–568 (DFPITLCFAASKGDSFLLHQLLKRGLDPNE), 572–601 (YGRTALHIAASNGNEQCVRLLLENGADSNS), 605–634 (EGRVPLWEALCRRHQTVVQLLVDAGADLSG), 636–665 (DAAPYARVAVEQNDAALLGEIVRHGGDVSG), and 670–699 (DGTTALHRAVLDGNVQMARLLLEHGADADA). Disordered regions lie at residues 726-779 (ATRH…TPQR) and 801-824 (GGYRGGGGGGGAAAERERSSSSPP). The segment covering 754 to 776 (SSPSSSSRRGRTSSTSAASARST) has biased composition (low complexity). Residues 803-812 (YRGGGGGGGA) show a composition bias toward gly residues. The region spanning 827–907 (RVAISCPESR…VPPENRSRNQ (81 aa)) is the KHA domain.

The protein belongs to the potassium channel family. Plant (TC 1.A.1.4) subfamily.

It localises to the membrane. Its function is as follows. Probable inward-rectifying potassium channel. Assuming opened or closed conformations in response to the voltage difference across the membrane, the channel is activated by hyperpolarization. The sequence is that of Potassium channel AKT3 from Oryza sativa subsp. japonica (Rice).